Consider the following 295-residue polypeptide: MNTVTGAMSALITPFRNGRLDTETYEKLIQRQIRHGMDALVPVGTTGESATLSHSEHKECIEIAVKVCQGTGIKVLAGAGSNSTLEAIDLAKFAEKMGADGILCVTPYYNKPSQEGLFQHYKAVAESVGIPLMLYNVPGRTGVNLETCTIQRLFNEVKNIYGIKEASGSMERIVELNTKIPDFAILSGEDAINYPVLANHGVGVISVIGNLLPDKISALVHKALQGELDESRRINNSLYKINKALFVESNPIPIKAAMYLAGLTPTLEYRLPLVSPSQENMRMIEETLKDYEVKA.

Thr46 serves as a coordination point for pyruvate. Catalysis depends on Tyr135, which acts as the Proton donor/acceptor. Lys164 (schiff-base intermediate with substrate) is an active-site residue. Ile205 provides a ligand contact to pyruvate.

It belongs to the DapA family. Homotetramer; dimer of dimers.

Its subcellular location is the cytoplasm. The catalysed reaction is L-aspartate 4-semialdehyde + pyruvate = (2S,4S)-4-hydroxy-2,3,4,5-tetrahydrodipicolinate + H2O + H(+). It participates in amino-acid biosynthesis; L-lysine biosynthesis via DAP pathway; (S)-tetrahydrodipicolinate from L-aspartate: step 3/4. Its function is as follows. Catalyzes the condensation of (S)-aspartate-beta-semialdehyde [(S)-ASA] and pyruvate to 4-hydroxy-tetrahydrodipicolinate (HTPA). This is 4-hydroxy-tetrahydrodipicolinate synthase from Wolinella succinogenes (strain ATCC 29543 / DSM 1740 / CCUG 13145 / JCM 31913 / LMG 7466 / NCTC 11488 / FDC 602W) (Vibrio succinogenes).